The following is a 64-amino-acid chain: Large ribosomal subunit protein uL29 (64 aa).

The protein belongs to the universal ribosomal protein uL29 family.

The sequence is that of Large ribosomal subunit protein uL29 from Burkholderia ambifaria (strain MC40-6).